The chain runs to 199 residues: MSEPIQRKLILGSTSPYRRELLARLRIPFEVAAPDVDESARAGETPQQLACRLAMAKARAVAAQFPSCVVVGSDQVAELDGQALGKPGNHARAVAQLQQMRGKSVIFQTAVAVVCVETGFAQMDLAQVKVNFRQLSDAEIEAYLRAETPYDCAGSAKSEGLGIALLDSIDNDDPTALVGLPMIRTCRMIQAAGIKVLGA.

The active-site Proton acceptor is the Asp-74.

The protein belongs to the Maf family. YceF subfamily. The cofactor is a divalent metal cation.

The protein resides in the cytoplasm. The catalysed reaction is N(7)-methyl-GTP + H2O = N(7)-methyl-GMP + diphosphate + H(+). Nucleoside triphosphate pyrophosphatase that hydrolyzes 7-methyl-GTP (m(7)GTP). May have a dual role in cell division arrest and in preventing the incorporation of modified nucleotides into cellular nucleic acids. The chain is 7-methyl-GTP pyrophosphatase from Albidiferax ferrireducens (strain ATCC BAA-621 / DSM 15236 / T118) (Rhodoferax ferrireducens).